The following is a 161-amino-acid chain: Transcriptional repressor NrdR (161 aa).

The segment covering 1 to 11 (MQCPHCQHHNS) has biased composition (basic residues). The tract at residues 1 to 21 (MQCPHCQHHNSRVLESRSSEG) is disordered. The segment at 3–34 (CPHCQHHNSRVLESRSSEGGQSIRRRRECLEC) is a zinc-finger region. An ATP-cone domain is found at 49–139 (VTVIKQDGER…VYGRFQGIAD (91 aa)).

The protein belongs to the NrdR family. The cofactor is Zn(2+).

Functionally, negatively regulates transcription of bacterial ribonucleotide reductase nrd genes and operons by binding to NrdR-boxes. This chain is Transcriptional repressor NrdR, found in Synechocystis sp. (strain ATCC 27184 / PCC 6803 / Kazusa).